The sequence spans 393 residues: S-adenosylmethionine synthase 2 (393 aa).

Glutamate 9 provides a ligand contact to Mg(2+). Histidine 15 contacts ATP. Glutamate 43 serves as a coordination point for K(+). Residues glutamate 56 and glutamine 99 each contribute to the L-methionine site. ATP contacts are provided by residues aspartate 167–lysine 169, serine 235–phenylalanine 238, aspartate 246, arginine 252–lysine 253, alanine 269, lysine 273, and lysine 277. Aspartate 246 is an L-methionine binding site. An L-methionine-binding site is contributed by lysine 277.

This sequence belongs to the AdoMet synthase family. In terms of assembly, homotetramer. It depends on Mn(2+) as a cofactor. The cofactor is Mg(2+). Co(2+) serves as cofactor. Requires K(+) as cofactor. NH4(+) is required as a cofactor. In terms of tissue distribution, mostly expressed in roots, and, to a lower extent, in hypocotyls and cotyledons.

Its subcellular location is the cytoplasm. It catalyses the reaction L-methionine + ATP + H2O = S-adenosyl-L-methionine + phosphate + diphosphate. It participates in amino-acid biosynthesis; S-adenosyl-L-methionine biosynthesis; S-adenosyl-L-methionine from L-methionine: step 1/1. With respect to regulation, inhibited by products of SAMS reaction (SAM, Pi, PPi), substrate analogs (cycloleucine and ethionine), and alternative nucleotides (GTP, CTP and ADP). Strongly repressed by PPPi. Its function is as follows. Catalyzes the formation of S-adenosylmethionine from methionine and ATP. The reaction comprises two steps that are both catalyzed by the same enzyme: formation of S-adenosylmethionine (AdoMet) and triphosphate, and subsequent hydrolysis of the triphosphate. In Catharanthus roseus (Madagascar periwinkle), this protein is S-adenosylmethionine synthase 2 (SAMS2).